Consider the following 505-residue polypeptide: Glycerol kinase (505 aa).

Residue Thr12 coordinates ADP. Residues Thr12, Thr13, and Ser14 each contribute to the ATP site. Sn-glycerol 3-phosphate is bound at residue Thr12. Arg16 provides a ligand contact to ADP. Sn-glycerol 3-phosphate-binding residues include Arg82, Glu83, Tyr134, and Asp249. Residues Arg82, Glu83, Tyr134, Asp249, and Gln250 each contribute to the glycerol site. ADP-binding residues include Thr271 and Gly315. Thr271, Gly315, Gln319, and Gly416 together coordinate ATP. Residues Gly416 and Asn420 each coordinate ADP.

This sequence belongs to the FGGY kinase family.

It carries out the reaction glycerol + ATP = sn-glycerol 3-phosphate + ADP + H(+). Its pathway is polyol metabolism; glycerol degradation via glycerol kinase pathway; sn-glycerol 3-phosphate from glycerol: step 1/1. Its activity is regulated as follows. Inhibited by fructose 1,6-bisphosphate (FBP). Functionally, key enzyme in the regulation of glycerol uptake and metabolism. Catalyzes the phosphorylation of glycerol to yield sn-glycerol 3-phosphate. This Mycolicibacterium gilvum (strain PYR-GCK) (Mycobacterium gilvum (strain PYR-GCK)) protein is Glycerol kinase.